The chain runs to 378 residues: Probable cytochrome oxidase subunit 2 (378 aa).

The Cytoplasmic portion of the chain corresponds to 1–8; the sequence is MIDYEFLR. A helical transmembrane segment spans residues 9–28; sequence FIWWVLVIVLLIGFSVTDGF. Over 29–79 the chain is Periplasmic; the sequence is DMGVTALLPVIGKKEVERRIMINTIAPHWDGNQVWLLTAGGAIFAAWPIVY. Residues 80 to 99 form a helical membrane-spanning segment; that stretch reads AVSFSGFYIALVLVLAALFL. The Cytoplasmic segment spans residues 100–122; sequence RPLGFEYRAKIDNPTWRSVWDWG. The chain crosses the membrane as a helical span at residues 123 to 142; it reads LFAGGFVPALVFGVAFGNLL. At 143–164 the chain is on the periplasmic side; that stretch reads QGVPFHFNELTQVTYTGSFFEL. The chain crosses the membrane as a helical span at residues 165–184; it reads LNPFALLCGVISLSMLVTHG. Topologically, residues 185 to 205 are cytoplasmic; sequence ANWLQMKTTEALRDRARTVSQ. Residues 206–224 traverse the membrane as a helical segment; the sequence is IGSIVTLIAFVLAGVWLYS. At 225–261 the chain is on the periplasmic side; the sequence is KDGYVVTSTIDHFAPSSPMNKEVAVETGAWFRNFNEM. A helical membrane pass occupies residues 262 to 281; it reads PILWIFPALAVVAALLNAAF. The Cytoplasmic portion of the chain corresponds to 282 to 291; sequence SKANRCGFAF. A helical membrane pass occupies residues 292–311; sequence FFSALTMAGVIITAAVSMFP. The Periplasmic segment spans residues 312–335; that stretch reads FVMPSSSHPEQSLLMWDSTSSELT. The helical transmembrane segment at 336–355 threads the bilayer; it reads LTLMLIFAVVFVVIALAYTI. The Cytoplasmic portion of the chain corresponds to 356–378; the sequence is WSYSKMFGRLDANFIDKNKHSLY.

Belongs to the cytochrome ubiquinol oxidase subunit 2 family. In terms of assembly, heterodimer of subunits I and II.

Its subcellular location is the cell inner membrane. Its function is as follows. Probable cytochrome oxidase subunit. The chain is Probable cytochrome oxidase subunit 2 from Haemophilus influenzae (strain ATCC 51907 / DSM 11121 / KW20 / Rd).